Here is a 478-residue protein sequence, read N- to C-terminus: Putative indole-3-acetic acid-amido synthetase GH3.10 (478 aa).

It belongs to the IAA-amido conjugating enzyme family.

In terms of biological role, may catalyze the synthesis of indole-3-acetic acid (IAA)-amino acid conjugates, providing a mechanism for the plant to cope with the presence of excess auxin. The sequence is that of Putative indole-3-acetic acid-amido synthetase GH3.10 (GH3.10) from Oryza sativa subsp. japonica (Rice).